A 329-amino-acid polypeptide reads, in one-letter code: Delta-aminolevulinic acid dehydratase (329 aa).

The active-site Schiff-base intermediate with substrate is Lys202. Residues Arg212 and Arg223 each contribute to the 5-aminolevulinate site. A Mg(2+)-binding site is contributed by Glu239. Lys254 serves as the catalytic Schiff-base intermediate with substrate. Ser280 and Tyr319 together coordinate 5-aminolevulinate.

The protein belongs to the ALAD family. In terms of assembly, homooctamer.

The catalysed reaction is 2 5-aminolevulinate = porphobilinogen + 2 H2O + H(+). The protein operates within porphyrin-containing compound metabolism; protoporphyrin-IX biosynthesis; coproporphyrinogen-III from 5-aminolevulinate: step 1/4. In terms of biological role, catalyzes an early step in the biosynthesis of tetrapyrroles. Binds two molecules of 5-aminolevulinate per subunit, each at a distinct site, and catalyzes their condensation to form porphobilinogen. The sequence is that of Delta-aminolevulinic acid dehydratase (hemB) from Mycobacterium leprae (strain TN).